The sequence spans 138 residues: MIMKLVSDQIQERKFIIEFQLFNLIDELGLSVKKDHERKIFIYALLYVQLMHQPYSAMNTISQLEPVTTYEKIKISYYTNYLSTYLSTSYSQERERIISIISKTFIDSINPEMNLYNFNDFVTMFAFKKLLQQVFHEN.

Interacts with PilB but not with TfpB.

Acts as a PilB inhibitor to control natural transformation. Inhibits type IV pili (T4P) extension by specifically binding and inhibiting the pilus extension ATPase PilB but not TfpB. This activity probably modulates T4P extension under different environmental conditions. The protein is PilB-specific inhibitory protein CpiA of Acinetobacter baylyi (strain ATCC 33305 / BD413 / ADP1).